The following is a 158-amino-acid chain: C-type lectin BfL-2 (158 aa).

An N-terminal signal peptide occupies residues 1–21 (MGHFTFIGLCLLAMFLSLSGA). 4 disulfide bridges follow: Cys26–Cys37, Cys54–Cys154, Cys61–Cys156, and Cys129–Cys146. Residues 33–155 (KNGLCYKVFS…CETLHPFICQ (123 aa)) enclose the C-type lectin domain. A Mannose-binding motif is present at residues 119–121 (EPN). The N-linked (GlcNAc...) asparagine glycan is linked to Asn121. The Ca(2+) site is built by Glu127, Asn142, and Asp143.

The protein belongs to the true venom lectin family. In terms of assembly, homodimer; non-covalently linked. Expressed by the venom gland.

Its subcellular location is the secreted. Mannose-binding lectin which recognizes specific carbohydrate structures and agglutinates a variety of animal cells by binding to cell-surface glycoproteins and glycolipids. May be a calcium-dependent lectin. This is C-type lectin BfL-2 from Bungarus fasciatus (Banded krait).